The chain runs to 88 residues: Small ribosomal subunit protein bS20 (88 aa).

The disordered stretch occupies residues 1–20 (MANTAQARKRARQAVVQNAH).

It belongs to the bacterial ribosomal protein bS20 family.

Its function is as follows. Binds directly to 16S ribosomal RNA. In Ralstonia nicotianae (strain ATCC BAA-1114 / GMI1000) (Ralstonia solanacearum), this protein is Small ribosomal subunit protein bS20.